The chain runs to 491 residues: 3-octaprenyl-4-hydroxybenzoate carboxy-lyase (491 aa).

Residue Asn-172 participates in Mn(2+) binding. Prenylated FMN is bound by residues 175 to 177 (IYR), 189 to 191 (RWL), and 194 to 195 (RG). Glu-238 contributes to the Mn(2+) binding site. The active-site Proton donor is Asp-287.

It belongs to the UbiD family. In terms of assembly, homohexamer. The cofactor is prenylated FMN. Mn(2+) serves as cofactor.

The protein localises to the cell membrane. It carries out the reaction a 4-hydroxy-3-(all-trans-polyprenyl)benzoate + H(+) = a 2-(all-trans-polyprenyl)phenol + CO2. It functions in the pathway cofactor biosynthesis; ubiquinone biosynthesis. Catalyzes the decarboxylation of 3-octaprenyl-4-hydroxy benzoate to 2-octaprenylphenol, an intermediate step in ubiquinone biosynthesis. In Histophilus somni (strain 2336) (Haemophilus somnus), this protein is 3-octaprenyl-4-hydroxybenzoate carboxy-lyase.